The primary structure comprises 191 residues: Leucyl/phenylalanyl-tRNA--protein transferase (191 aa).

Belongs to the L/F-transferase family.

It is found in the cytoplasm. The catalysed reaction is N-terminal L-lysyl-[protein] + L-leucyl-tRNA(Leu) = N-terminal L-leucyl-L-lysyl-[protein] + tRNA(Leu) + H(+). It catalyses the reaction N-terminal L-arginyl-[protein] + L-leucyl-tRNA(Leu) = N-terminal L-leucyl-L-arginyl-[protein] + tRNA(Leu) + H(+). It carries out the reaction L-phenylalanyl-tRNA(Phe) + an N-terminal L-alpha-aminoacyl-[protein] = an N-terminal L-phenylalanyl-L-alpha-aminoacyl-[protein] + tRNA(Phe). Functions in the N-end rule pathway of protein degradation where it conjugates Leu, Phe and, less efficiently, Met from aminoacyl-tRNAs to the N-termini of proteins containing an N-terminal arginine or lysine. This is Leucyl/phenylalanyl-tRNA--protein transferase from Herpetosiphon aurantiacus (strain ATCC 23779 / DSM 785 / 114-95).